Reading from the N-terminus, the 27-residue chain is Carcinustatin-20 (27 aa).

The residue at position 27 (leucine 27) is a Leucine amide.

Belongs to the allatostatin family.

It is found in the secreted. Functionally, may act as a neurotransmitter or neuromodulator. The protein is Carcinustatin-20 of Carcinus maenas (Common shore crab).